Reading from the N-terminus, the 159-residue chain is Large ribosomal subunit protein uL15 (159 aa).

The segment covering 1–11 has biased composition (basic and acidic residues); that stretch reads MKLNELRDNEG. The segment at 1–40 is disordered; sequence MKLNELRDNEGARYQSKRLGRGIGSGKGKTSGKGVKGQTS. The span at 21–35 shows a compositional bias: gly residues; that stretch reads RGIGSGKGKTSGKGV.

Belongs to the universal ribosomal protein uL15 family. Part of the 50S ribosomal subunit.

Functionally, binds to the 23S rRNA. The protein is Large ribosomal subunit protein uL15 of Paramagnetospirillum magneticum (strain ATCC 700264 / AMB-1) (Magnetospirillum magneticum).